The sequence spans 271 residues: Neurexophilin-1 (271 aa).

The signal sequence occupies residues 1 to 21 (MQAACWYVLLLLQPTIYLVTC). The tract at residues 22–97 (ANLTNGGKSE…WDWLRNSTDL (76 aa)) is II. N-linked (GlcNAc...) asparagine glycosylation is found at Asn23, Asn68, Asn93, Asn146, Asn156, and Asn162. The tract at residues 98–176 (QEPRPRAKRR…LVPPTKIVEF (79 aa)) is III. Positions 177–185 (DLAQQTVID) are IV (linker domain). The tract at residues 186–271 (AKDSKSFNCR…HSDTPYFPSG (86 aa)) is v (Cys-rich).

This sequence belongs to the neurexophilin family.

Its subcellular location is the secreted. In terms of biological role, may be signaling molecules that resemble neuropeptides and that act by binding to alpha-neurexins and possibly other receptors. This is Neurexophilin-1 (NXPH1) from Pongo abelii (Sumatran orangutan).